A 330-amino-acid chain; its full sequence is Phosphate acyltransferase (330 aa).

This sequence belongs to the PlsX family. As to quaternary structure, homodimer. Probably interacts with PlsY.

The protein localises to the cytoplasm. The catalysed reaction is a fatty acyl-[ACP] + phosphate = an acyl phosphate + holo-[ACP]. Its pathway is lipid metabolism; phospholipid metabolism. In terms of biological role, catalyzes the reversible formation of acyl-phosphate (acyl-PO(4)) from acyl-[acyl-carrier-protein] (acyl-ACP). This enzyme utilizes acyl-ACP as fatty acyl donor, but not acyl-CoA. This is Phosphate acyltransferase from Teredinibacter turnerae (strain ATCC 39867 / T7901).